We begin with the raw amino-acid sequence, 260 residues long: uncharacterized protein (260 aa).

Positions 1–22 are cleaved as a signal peptide; it reads MGYSKRFALYISILILIVMVAG. The N-palmitoyl cysteine moiety is linked to residue cysteine 23. Residue cysteine 23 is the site of S-diacylglycerol cysteine attachment.

The protein belongs to the staphylococcal tandem lipoprotein family.

Its subcellular location is the cell membrane. This is an uncharacterized protein from Staphylococcus aureus (strain N315).